The chain runs to 296 residues: Mycothiol acetyltransferase (296 aa).

N-acetyltransferase domains lie at 1–148 and 151–296; these read MTEW…IRVD and VTVR…YGRA. A 1D-myo-inositol 2-(L-cysteinylamino)-2-deoxy-alpha-D-glucopyranoside-binding site is contributed by Glu34. Acetyl-CoA is bound by residues 79–81 and 87–92; these read LVV and RRGIGS. Glu178, Lys219, and Glu229 together coordinate 1D-myo-inositol 2-(L-cysteinylamino)-2-deoxy-alpha-D-glucopyranoside. Acetyl-CoA contacts are provided by residues 233 to 235 and 240 to 246; these read VGV and QGRGLGH. Tyr267 contacts 1D-myo-inositol 2-(L-cysteinylamino)-2-deoxy-alpha-D-glucopyranoside. Acetyl-CoA is bound at residue 272-277; it reads NQAALR.

Belongs to the acetyltransferase family. MshD subfamily. As to quaternary structure, monomer.

It catalyses the reaction 1D-myo-inositol 2-(L-cysteinylamino)-2-deoxy-alpha-D-glucopyranoside + acetyl-CoA = mycothiol + CoA + H(+). In terms of biological role, catalyzes the transfer of acetyl from acetyl-CoA to desacetylmycothiol (Cys-GlcN-Ins) to form mycothiol. This is Mycothiol acetyltransferase from Mycobacteroides abscessus (strain ATCC 19977 / DSM 44196 / CCUG 20993 / CIP 104536 / JCM 13569 / NCTC 13031 / TMC 1543 / L948) (Mycobacterium abscessus).